The sequence spans 115 residues: Large ribosomal subunit protein bL19 (115 aa).

This sequence belongs to the bacterial ribosomal protein bL19 family.

This protein is located at the 30S-50S ribosomal subunit interface and may play a role in the structure and function of the aminoacyl-tRNA binding site. The sequence is that of Large ribosomal subunit protein bL19 from Erwinia tasmaniensis (strain DSM 17950 / CFBP 7177 / CIP 109463 / NCPPB 4357 / Et1/99).